The sequence spans 637 residues: Serine/threonine-protein kinase Nek11 (637 aa).

The Protein kinase domain maps to 29–287; that stretch reads YVLQQKLGSG…AIEILKIPYI (259 aa). ATP-binding positions include 35-43 and Lys61; that span reads LGSGSFGTV. The active-site Proton acceptor is the Asp158. Ser273 carries the post-translational modification Phosphoserine; by CHEK1. Residues 302–385 are a coiled coil; that stretch reads TLEDKNLDCQ…QELRSRNFQQ (84 aa). Positions 399-446 are disordered; it reads GMEEKEEQPEGRPSCSPQDEDEERWQDREEEFDEPTLENLSEPQPIPS. The segment covering 416–434 has biased composition (acidic residues); that stretch reads QDEDEERWQDREEEFDEPT.

Belongs to the protein kinase superfamily. NEK Ser/Thr protein kinase family. NIMA subfamily. As to quaternary structure, interacts with NEK2. The cofactor is Mn(2+). Mg(2+) is required as a cofactor. In terms of processing, phosphorylated by NEK2. Phosphorylation at Ser-273 is important for its activation.

It localises to the nucleus. It is found in the nucleolus. It carries out the reaction L-seryl-[protein] + ATP = O-phospho-L-seryl-[protein] + ADP + H(+). The catalysed reaction is L-threonyl-[protein] + ATP = O-phospho-L-threonyl-[protein] + ADP + H(+). With respect to regulation, autorepressed by intramolecular binding of the C-terminus which dissociates following phosphorylation by NEK2. Activated in response to DNA damage. Inhibited by zinc. Protein kinase which plays an important role in the G2/M checkpoint response to DNA damage. Controls degradation of CDC25A by directly phosphorylating it on residues whose phosphorylation is required for BTRC-mediated polyubiquitination and degradation. The chain is Serine/threonine-protein kinase Nek11 (NEK11) from Macaca fascicularis (Crab-eating macaque).